We begin with the raw amino-acid sequence, 257 residues long: HTH-type transcriptional activator mta (257 aa).

The 70-residue stretch at 2-71 (KYQVKQVAEI…LDEIKEMLDH (70 aa)) folds into the HTH merR-type domain. The segment at residues 5-24 (VKQVAEISGVSIRTLHHYDN) is a DNA-binding region (H-T-H motif). The hinge stretch occupies residues 71–74 (HPNF). The interval 76–104 (RKAALQSQKEILMKKKQRMDEMIQTIDRT) is essential for dimerization. A coiled-coil region spans residues 76-107 (RKAALQSQKEILMKKKQRMDEMIQTIDRTLLS).

Homodimer.

The protein localises to the cytoplasm. Its function is as follows. Global transcriptional regulator that activates transcription of bmr and blt by binding directly to their promoter. Also stimulates the expression of the mta gene itself, ydfK and ymfE. The sequence is that of HTH-type transcriptional activator mta (mta) from Bacillus subtilis (strain 168).